Here is a 48-residue protein sequence, read N- to C-terminus: ATP synthase protein 8 (48 aa).

The chain crosses the membrane as a helical span at residues 16-36 (GFLLMTILLVLFSQFFLPMIL).

Belongs to the ATPase protein 8 family. In terms of assembly, F-type ATPases have 2 components, CF(1) - the catalytic core - and CF(0) - the membrane proton channel.

It is found in the mitochondrion membrane. Functionally, mitochondrial membrane ATP synthase (F(1)F(0) ATP synthase or Complex V) produces ATP from ADP in the presence of a proton gradient across the membrane which is generated by electron transport complexes of the respiratory chain. F-type ATPases consist of two structural domains, F(1) - containing the extramembraneous catalytic core and F(0) - containing the membrane proton channel, linked together by a central stalk and a peripheral stalk. During catalysis, ATP synthesis in the catalytic domain of F(1) is coupled via a rotary mechanism of the central stalk subunits to proton translocation. Part of the complex F(0) domain. Minor subunit located with subunit a in the membrane. The sequence is that of ATP synthase protein 8 (ATP8) from Vanderwaltozyma polyspora (strain ATCC 22028 / DSM 70294 / BCRC 21397 / CBS 2163 / NBRC 10782 / NRRL Y-8283 / UCD 57-17) (Kluyveromyces polysporus).